Consider the following 193-residue polypeptide: Xanthine phosphoribosyltransferase (193 aa).

Xanthine is bound by residues leucine 20 and threonine 27. A 5-phospho-alpha-D-ribose 1-diphosphate-binding site is contributed by 128 to 132; that stretch reads ANGQA. Lysine 156 provides a ligand contact to xanthine.

The protein belongs to the purine/pyrimidine phosphoribosyltransferase family. Xpt subfamily. Homodimer.

Its subcellular location is the cytoplasm. It carries out the reaction XMP + diphosphate = xanthine + 5-phospho-alpha-D-ribose 1-diphosphate. Its pathway is purine metabolism; XMP biosynthesis via salvage pathway; XMP from xanthine: step 1/1. Functionally, converts the preformed base xanthine, a product of nucleic acid breakdown, to xanthosine 5'-monophosphate (XMP), so it can be reused for RNA or DNA synthesis. The chain is Xanthine phosphoribosyltransferase from Streptococcus equi subsp. zooepidemicus (strain H70).